Here is a 288-residue protein sequence, read N- to C-terminus: METSPQFRLIFAVIISSLIAFRSYKRKSLDLSGGIAGFLVMTIHFTAGFRYGALLLVFFLTSSKLTKVGEDKKRRVDVEFKEGGQRNWVQVLCNSGIASVLVVIACTLTGWKDKCLDSKQSEIVTALIGGIIGHYACCNGDTWSSELGVLSDAQPRLITTFKPVKKGTNGGVTKAGLLAALAAGTTVGLTFLIFGLFTASCASDVALKQLLVIPLSALAGLCGSLIDSILGATIQFSGFCSVRNKVVGKPGPTVKKISGVDILDNNGVNFVSILLTSFLTSIASVYIF.

7 helical membrane-spanning segments follow: residues 1 to 21 (METS…LIAF), 29 to 49 (LDLS…TAGF), 91 to 111 (VLCN…LTGW), 123 to 143 (IVTA…GDTW), 177 to 197 (LLAA…FGLF), 210 to 230 (LLVI…DSIL), and 268 to 288 (VNFV…VYIF).

It belongs to the TMEM19 family. As to expression, expressed in the vasculature of leaves, roots, inflorescences, siliques, anther filaments and sepals. Detected primarily in the phloem tissues, including in the root ans shoot apical meristems.

The protein resides in the cell membrane. Functionally, involved in the glucose-triggered developmental leaf growth process. This Arabidopsis thaliana (Mouse-ear cress) protein is Protein PGR.